The chain runs to 508 residues: GMP synthase [glutamine-hydrolyzing] (508 aa).

The Glutamine amidotransferase type-1 domain maps to 1–189 (MILVLDFGSQ…ALLVCDCEKT (189 aa)). Cys78 functions as the Nucleophile in the catalytic mechanism. Catalysis depends on residues His163 and Glu165. Residues 190–383 (WGMQHFAQRE…LGISQDFLMR (194 aa)) enclose the GMPS ATP-PPase domain. 217 to 223 (SGGVDST) lines the ATP pocket.

As to quaternary structure, homodimer.

The catalysed reaction is XMP + L-glutamine + ATP + H2O = GMP + L-glutamate + AMP + diphosphate + 2 H(+). It participates in purine metabolism; GMP biosynthesis; GMP from XMP (L-Gln route): step 1/1. Functionally, catalyzes the synthesis of GMP from XMP. The protein is GMP synthase [glutamine-hydrolyzing] of Helicobacter pylori (strain HPAG1).